Consider the following 234-residue polypeptide: Sugar fermentation stimulation protein A (234 aa).

Positions 201-220 (LLSEAQNKGVEVLAYKAELS) form a DNA-binding region, H-T-H motif.

Belongs to the SfsA family.

Functionally, binds to DNA non-specifically. Could be a regulatory factor involved in maltose metabolism. The sequence is that of Sugar fermentation stimulation protein A from Salmonella gallinarum (strain 287/91 / NCTC 13346).